Here is a 309-residue protein sequence, read N- to C-terminus: Probable 2,4-dienoyl-CoA reductase 3 [(3E)-enoyl-CoA-producing] (309 aa).

NADP(+) is bound by residues 32-37, R57, and D83; that span reads GGGTGI. Residue R57 participates in substrate binding. Substrate-binding residues include F116 and S124. Y166 acts as the Proton acceptor in catalysis. NADP(+)-binding positions include K181 and 207 to 210; that span reads PGPI. R218 is a substrate binding site.

It belongs to the short-chain dehydrogenases/reductases (SDR) family. 2,4-dienoyl-CoA reductase subfamily.

It catalyses the reaction a (2E,4E)-dienoyl-CoA + NADPH + H(+) = a 4,5-saturated-(3E)-enoyl-CoA + NADP(+). It carries out the reaction a (2E,4Z)-dienoyl-CoA + NADPH + H(+) = a 4,5-saturated-(3E)-enoyl-CoA + NADP(+). In terms of biological role, auxiliary enzyme of beta-oxidation. It participates in the metabolism of unsaturated fatty enoyl-CoA esters having double bonds in both even- and odd-numbered positions. Catalyzes the NADP-dependent reduction of 2,4-dienoyl-CoA to yield trans-3-enoyl-CoA. The polypeptide is Probable 2,4-dienoyl-CoA reductase 3 [(3E)-enoyl-CoA-producing] (Caenorhabditis elegans).